Here is a 670-residue protein sequence, read N- to C-terminus: PML-RARA-regulated adapter molecule 1 (670 aa).

Residues 1 to 561 (MAHHLPAAME…PQQLPPMDPK (561 aa)) are disordered. Residues 31–43 (DLPKKPPKPEFGK) are compositionally biased toward basic and acidic residues. A run of 4 repeats spans residues 70–81 (KPPPPEVTDLPK), 82–93 (KPPPPEVTDLPK), 94–105 (KPPPPEVTDLPK), and 106–117 (KPPPPEVTDLPK). Positions 70–165 (KPPPPEVTDL…SLPEPGAPAR (96 aa)) are 4 X 12 AA repeats of K-P-P-[PQ]-P-[EQ]-[VAF]-T-D-L-P-K. Residues 114 to 129 (DLPKKPSKLELSDLSK) are compositionally biased toward basic and acidic residues. Position 340 is a phosphoserine (serine 340). The span at 386–398 (SSASESSLPAAVA) shows a compositional bias: low complexity. Over residues 454-463 (PAKPPLPPGP) the composition is skewed to pro residues. Over residues 504 to 514 (EIYELYDDVEP) the composition is skewed to acidic residues. Over residues 515-528 (RDDSSPSPKGRDEA) the composition is skewed to basic and acidic residues. Residues 571–649 (KAEREFRKKF…PRTALLPLET (79 aa)) enclose the SH3 domain.

Interacts with SKAP2, LCP2 and DBNL. May interact with LYN. Interacts with NEK6. In terms of processing, may be phosphorylated on tyrosines. As to expression, expressed in peripheral blood leukocytes and bone marrow. Expressed in monocytes, and to a lesser extent in granulocytes and lymphocytes. Not expressed in non hematopoietic tissues except in lung.

May be involved in myeloid differentiation. May be involved in integrin signaling in neutrophils. Binds to PtdIns(4)P. The chain is PML-RARA-regulated adapter molecule 1 (PRAM1) from Homo sapiens (Human).